Here is a 263-residue protein sequence, read N- to C-terminus: Formamidopyrimidine-DNA glycosylase (263 aa).

Residue proline 2 is the Schiff-base intermediate with DNA of the active site. Glutamate 3 functions as the Proton donor in the catalytic mechanism. Lysine 59 functions as the Proton donor; for beta-elimination activity in the catalytic mechanism. 2 residues coordinate DNA: histidine 93 and arginine 111. The segment at lysine 229–lysine 263 adopts an FPG-type zinc-finger fold. The Proton donor; for delta-elimination activity role is filled by arginine 253.

It belongs to the FPG family. As to quaternary structure, monomer. Zn(2+) is required as a cofactor.

The enzyme catalyses Hydrolysis of DNA containing ring-opened 7-methylguanine residues, releasing 2,6-diamino-4-hydroxy-5-(N-methyl)formamidopyrimidine.. It carries out the reaction 2'-deoxyribonucleotide-(2'-deoxyribose 5'-phosphate)-2'-deoxyribonucleotide-DNA = a 3'-end 2'-deoxyribonucleotide-(2,3-dehydro-2,3-deoxyribose 5'-phosphate)-DNA + a 5'-end 5'-phospho-2'-deoxyribonucleoside-DNA + H(+). Involved in base excision repair of DNA damaged by oxidation or by mutagenic agents. Acts as a DNA glycosylase that recognizes and removes damaged bases. Has a preference for oxidized purines, such as 7,8-dihydro-8-oxoguanine (8-oxoG). Has AP (apurinic/apyrimidinic) lyase activity and introduces nicks in the DNA strand. Cleaves the DNA backbone by beta-delta elimination to generate a single-strand break at the site of the removed base with both 3'- and 5'-phosphates. The sequence is that of Formamidopyrimidine-DNA glycosylase from Carboxydothermus hydrogenoformans (strain ATCC BAA-161 / DSM 6008 / Z-2901).